We begin with the raw amino-acid sequence, 354 residues long: Homeobox protein Nkx-2.4 (354 aa).

The homeobox DNA-binding region spans 189–248; that stretch reads RRKRRVLFSQAQVYELERRFKQQKYLSAPEREHLASMIHLTPTQVKIWFQNHRYKMKRQA. The disordered stretch occupies residues 246 to 329; that stretch reads RQAKDKAAQQ…PALHGPGGGL (84 aa). Positions 263–272 are enriched in pro residues; that stretch reads GPPPPPPPSP.

This sequence belongs to the NK-2 homeobox family.

The protein localises to the nucleus. Functionally, probable transcription factor. This is Homeobox protein Nkx-2.4 (NKX2-4) from Homo sapiens (Human).